Here is a 91-residue protein sequence, read N- to C-terminus: Small ribosomal subunit protein uS19 (91 aa).

It belongs to the universal ribosomal protein uS19 family.

Its function is as follows. Protein S19 forms a complex with S13 that binds strongly to the 16S ribosomal RNA. In Hahella chejuensis (strain KCTC 2396), this protein is Small ribosomal subunit protein uS19.